Consider the following 294-residue polypeptide: 4-hydroxy-tetrahydrodipicolinate synthase (294 aa).

Position 44 (Thr44) interacts with pyruvate. Tyr132 (proton donor/acceptor) is an active-site residue. The active-site Schiff-base intermediate with substrate is the Lys160. Val202 provides a ligand contact to pyruvate.

This sequence belongs to the DapA family. As to quaternary structure, homotetramer; dimer of dimers.

Its subcellular location is the cytoplasm. The enzyme catalyses L-aspartate 4-semialdehyde + pyruvate = (2S,4S)-4-hydroxy-2,3,4,5-tetrahydrodipicolinate + H2O + H(+). The protein operates within amino-acid biosynthesis; L-lysine biosynthesis via DAP pathway; (S)-tetrahydrodipicolinate from L-aspartate: step 3/4. In terms of biological role, catalyzes the condensation of (S)-aspartate-beta-semialdehyde [(S)-ASA] and pyruvate to 4-hydroxy-tetrahydrodipicolinate (HTPA). This chain is 4-hydroxy-tetrahydrodipicolinate synthase, found in Leptospira borgpetersenii serovar Hardjo-bovis (strain L550).